The sequence spans 645 residues: Developmental regulatory protein wetA (645 aa).

5 disordered regions span residues S158 to K187, T201 to P249, Y284 to W376, A461 to S578, and G596 to R618. Over residues T240–P249 the composition is skewed to polar residues. 2 stretches are compositionally biased toward basic residues: residues Q315 to Q326 and Q351 to Q361. Positions Q362 to Q373 are enriched in low complexity. The span at G509–D518 shows a compositional bias: polar residues. Positions S528–S546 are enriched in low complexity. A compositionally biased stretch (polar residues) spans I562 to G572.

The protein belongs to the wetA family.

In terms of biological role, brlA, abaA and wetA are pivotal regulators of conidiophore development and conidium maturation. They act individually and together to regulate their own expression and that of numerous other sporulation-specific genes. BrlA, abaA and wetA act together to positively regulate the expression of the Pks1 gene cluster that mediates the biosynthesis of an anthraquinone derivative pigment that contributes to conidial pigmentation that provides protection from UV radiation, heat and cold stress. The polypeptide is Developmental regulatory protein wetA (Metarhizium robertsii (strain ARSEF 23 / ATCC MYA-3075) (Metarhizium anisopliae (strain ARSEF 23))).